Here is a 64-residue protein sequence, read N- to C-terminus: U2-aranetoxin-Av1a (64 aa).

Expressed in fat body, but not in cephalothorax, silk gland, midgut.

Insecticidal toxin. The polypeptide is U2-aranetoxin-Av1a (Araneus ventricosus (Orbweaver spider)).